Consider the following 176-residue polypeptide: Peptide methionine sulfoxide reductase MsrA (176 aa).

Cysteine 10 is a catalytic residue.

Belongs to the MsrA Met sulfoxide reductase family.

It carries out the reaction L-methionyl-[protein] + [thioredoxin]-disulfide + H2O = L-methionyl-(S)-S-oxide-[protein] + [thioredoxin]-dithiol. It catalyses the reaction [thioredoxin]-disulfide + L-methionine + H2O = L-methionine (S)-S-oxide + [thioredoxin]-dithiol. Functionally, has an important function as a repair enzyme for proteins that have been inactivated by oxidation. Catalyzes the reversible oxidation-reduction of methionine sulfoxide in proteins to methionine. The polypeptide is Peptide methionine sulfoxide reductase MsrA (Sulfolobus acidocaldarius (strain ATCC 33909 / DSM 639 / JCM 8929 / NBRC 15157 / NCIMB 11770)).